Reading from the N-terminus, the 248-residue chain is 14-3-3 protein sigma (248 aa).

A phosphoserine mark is found at S5, S74, and S248.

This sequence belongs to the 14-3-3 family. Homodimer. Interacts with KRT17 and SAMSN1. Found in a complex with XPO7, EIF4A1, ARHGAP1, VPS26A, VPS29 and VPS35. Interacts with GAB2. Interacts with SRPK2. Interacts with COPS6. Interacts with COP1; this interaction leads to proteasomal degradation. Interacts with the 'Thr-369' phosphorylated form of DAPK2. Interacts with PI4KB. Interacts with SLITRK1. Interacts with LRRK2; this interaction is dependent on LRRK2 phosphorylation. Interacts with PKP3 (via N-terminus); the interaction maintains the cytoplasmic pool of PKP3, facilitates PKP3 exchange at desmosomes and restricts PKP3 localization to existing desmosome cell junctions. Interacts with LCP2. Ubiquitinated. Ubiquitination by RFFL induces proteasomal degradation and indirectly regulates p53/TP53 activation. In terms of tissue distribution, present mainly in tissues enriched in stratified squamous keratinizing epithelium.

The protein resides in the cytoplasm. It is found in the nucleus. Its subcellular location is the secreted. Functionally, adapter protein implicated in the regulation of a large spectrum of both general and specialized signaling pathways. Binds to a large number of partners, usually by recognition of a phosphoserine or phosphothreonine motif. Binding generally results in the modulation of the activity of the binding partner. Promotes cytosolic retention of GBP1 GTPase by binding to phosphorylated GBP1, thereby inhibiting the innate immune response. Also acts as a TP53/p53-regulated inhibitor of G2/M progression. When bound to KRT17, regulates protein synthesis and epithelial cell growth by stimulating Akt/mTOR pathway. Acts to maintain desmosome cell junction adhesion in epithelial cells via interacting with and sequestering PKP3 to the cytoplasm, thereby restricting its translocation to existing desmosome structures and therefore maintaining desmosome protein homeostasis. Also acts to facilitate PKP3 exchange at desmosome plaques, thereby maintaining keratinocyte intercellular adhesion. May also regulate MDM2 autoubiquitination and degradation and thereby activate p53/TP53. The polypeptide is 14-3-3 protein sigma (SFN) (Homo sapiens (Human)).